A 251-amino-acid polypeptide reads, in one-letter code: L-ascorbate peroxidase 2, cytosolic (251 aa).

His-43 acts as the Proton acceptor in catalysis. Residue His-163 participates in heme b binding. K(+)-binding residues include Thr-164, Thr-180, Asn-182, Ile-185, and Asp-187.

The protein belongs to the peroxidase family. Ascorbate peroxidase subfamily. The cofactor is heme b. As to expression, detected in bundle sheath cells, the photosynthetic cells that surround the phloem and xylem.

The protein localises to the cytoplasm. It catalyses the reaction L-ascorbate + H2O2 = L-dehydroascorbate + 2 H2O. In terms of biological role, plays a key role in hydrogen peroxide removal. In Arabidopsis thaliana (Mouse-ear cress), this protein is L-ascorbate peroxidase 2, cytosolic.